The primary structure comprises 58 residues: MAKTIVHENESIDDALRRFKRSVSRSGTLQEYRKREFYEKPSVRRKLKSEAARKRRHY.

This sequence belongs to the bacterial ribosomal protein bS21 family.

The sequence is that of Small ribosomal subunit protein bS21 from Lactobacillus acidophilus (strain ATCC 700396 / NCK56 / N2 / NCFM).